The primary structure comprises 203 residues: Small ribosomal subunit protein uS4c (203 aa).

The disordered stretch occupies residues 15–43; the sequence is LGSLPGLTSKRPRSGSDLRNQSRSGKRSQ. In terms of domain architecture, S4 RNA-binding spans 89 to 169; sequence MRLDNILFRL…LPKHLTLHSL (81 aa).

Belongs to the universal ribosomal protein uS4 family. Part of the 30S ribosomal subunit. Contacts protein S5. The interaction surface between S4 and S5 is involved in control of translational fidelity.

It is found in the plastid. Its subcellular location is the chloroplast. Functionally, one of the primary rRNA binding proteins, it binds directly to 16S rRNA where it nucleates assembly of the body of the 30S subunit. Its function is as follows. With S5 and S12 plays an important role in translational accuracy. In Illicium oligandrum (Star anise), this protein is Small ribosomal subunit protein uS4c (rps4).